The sequence spans 683 residues: Phosphomethylpyrimidine synthase (683 aa).

Substrate-binding positions include Asn235, Met264, Tyr293, His329, 349–351, 390–393, and Glu429; these read SRG and DGMR. Position 433 (His433) interacts with Zn(2+). Tyr456 lines the substrate pocket. His497 serves as a coordination point for Zn(2+). Residues Cys577, Cys580, and Cys585 each contribute to the [4Fe-4S] cluster site. A disordered region spans residues 647 to 683; the sequence is RQSPGVESTSLESTSLESTVLESTSLESTALEKAKEV. Residues 653-675 show a composition bias toward low complexity; the sequence is ESTSLESTSLESTVLESTSLEST.

It belongs to the ThiC family. As to quaternary structure, homodimer. Requires [4Fe-4S] cluster as cofactor.

It carries out the reaction 5-amino-1-(5-phospho-beta-D-ribosyl)imidazole + S-adenosyl-L-methionine = 4-amino-2-methyl-5-(phosphooxymethyl)pyrimidine + CO + 5'-deoxyadenosine + formate + L-methionine + 3 H(+). It participates in cofactor biosynthesis; thiamine diphosphate biosynthesis. In terms of biological role, catalyzes the synthesis of the hydroxymethylpyrimidine phosphate (HMP-P) moiety of thiamine from aminoimidazole ribotide (AIR) in a radical S-adenosyl-L-methionine (SAM)-dependent reaction. The polypeptide is Phosphomethylpyrimidine synthase (Shewanella loihica (strain ATCC BAA-1088 / PV-4)).